A 485-amino-acid polypeptide reads, in one-letter code: Cysteine--tRNA ligase (485 aa).

Cys28 is a binding site for Zn(2+). Residues Met30–His40 carry the 'HIGH' region motif. Zn(2+) is bound by residues Cys212, His237, and Glu241. The short motif at Lys269–Ser273 is the 'KMSKS' region element. Lys272 contributes to the ATP binding site.

This sequence belongs to the class-I aminoacyl-tRNA synthetase family. In terms of assembly, monomer. The cofactor is Zn(2+).

It localises to the cytoplasm. It carries out the reaction tRNA(Cys) + L-cysteine + ATP = L-cysteinyl-tRNA(Cys) + AMP + diphosphate. This chain is Cysteine--tRNA ligase, found in Bordetella bronchiseptica (strain ATCC BAA-588 / NCTC 13252 / RB50) (Alcaligenes bronchisepticus).